The chain runs to 273 residues: 3-methyl-2-oxobutanoate hydroxymethyltransferase (273 aa).

Positions 49 and 88 each coordinate Mg(2+). 3-methyl-2-oxobutanoate contacts are provided by residues 49–50 (DS), aspartate 88, and lysine 118. Glutamate 120 serves as a coordination point for Mg(2+). Residue glutamate 187 is the Proton acceptor of the active site.

Belongs to the PanB family. Homodecamer; pentamer of dimers. Mg(2+) is required as a cofactor.

The protein localises to the cytoplasm. It carries out the reaction 3-methyl-2-oxobutanoate + (6R)-5,10-methylene-5,6,7,8-tetrahydrofolate + H2O = 2-dehydropantoate + (6S)-5,6,7,8-tetrahydrofolate. It participates in cofactor biosynthesis; (R)-pantothenate biosynthesis; (R)-pantoate from 3-methyl-2-oxobutanoate: step 1/2. Catalyzes the reversible reaction in which hydroxymethyl group from 5,10-methylenetetrahydrofolate is transferred onto alpha-ketoisovalerate to form ketopantoate. This chain is 3-methyl-2-oxobutanoate hydroxymethyltransferase, found in Sinorhizobium fredii (strain NBRC 101917 / NGR234).